Consider the following 272-residue polypeptide: Energy-coupling factor transporter ATP-binding protein EcfA1 (272 aa).

Residues 5 to 239 (IKIDNLKYSY…RKALHENGLE (235 aa)) enclose the ABC transporter domain. Residue 37–44 (GHNGSGKS) coordinates ATP. Glu-163 functions as the Proton acceptor in the catalytic mechanism.

Belongs to the ABC transporter superfamily. Energy-coupling factor EcfA family. Forms a stable energy-coupling factor (ECF) transporter complex probably composed of 2 membrane-embedded substrate-binding proteins (S component), 2 ATP-binding proteins (A component) and 2 transmembrane proteins (T component). This complex interacts with a number of substrate-specific components, including FolT, PanT and RibU for 5-formyltetrahydrofolate, pantothenate and riboflavin respectively.

Its subcellular location is the cell membrane. ATP-binding (A) component of a common energy-coupling factor (ECF) ABC-transporter complex. Unlike classic ABC transporters this ECF transporter provides the energy necessary to transport a number of different substrates including 5-formyltetrahydrofolate, pantothenate and riboflavin. Expression of the complex plus FolT in E.coli allows 5-formyltetrahydrofolate uptake; 5-formyltetrahydrofolate is not taken up in the absence of FolT or the EcfA1A2T complex. This chain is Energy-coupling factor transporter ATP-binding protein EcfA1, found in Leuconostoc mesenteroides subsp. mesenteroides (strain ATCC 8293 / DSM 20343 / BCRC 11652 / CCM 1803 / JCM 6124 / NCDO 523 / NBRC 100496 / NCIMB 8023 / NCTC 12954 / NRRL B-1118 / 37Y).